We begin with the raw amino-acid sequence, 289 residues long: Prepilin leader peptidase/N-methyltransferase (289 aa).

Residues 13 to 33 (AFVLCALVLGLLVGSFLNVVI) form a helical membrane-spanning segment. Residues Cys72, Cys75, Cys97, and Cys100 each coordinate Zn(2+). 5 helical membrane passes run 128 to 148 (FSWQ…MSMI), 159 to 179 (LVLP…FASL), 183 to 203 (LWGA…FKLV), 228 to 248 (VLPL…TVML), and 256 to 276 (GTPI…LLWG).

This sequence belongs to the peptidase A24 family. Requires Zn(2+) as cofactor.

The protein resides in the cell inner membrane. The enzyme catalyses Typically cleaves a -Gly-|-Phe- bond to release an N-terminal, basic peptide of 5-8 residues from type IV prepilin, and then N-methylates the new N-terminal amino group, the methyl donor being S-adenosyl-L-methionine.. Its function is as follows. Plays an essential role in type IV pili and type II pseudopili formation by proteolytically removing the leader sequence from substrate proteins and subsequently monomethylating the alpha-amino group of the newly exposed N-terminal phenylalanine. The chain is Prepilin leader peptidase/N-methyltransferase (pilD) from Stutzerimonas stutzeri (Pseudomonas stutzeri).